A 381-amino-acid polypeptide reads, in one-letter code: Putative heat shock protein HSP 90-beta 2 (381 aa).

3 residues coordinate ATP: N46, D88, and K107. Over residues K145–D174 the composition is skewed to basic and acidic residues. The disordered stretch occupies residues K145–K192. Position 177 is a phosphoserine (S177). Residues E315–K347 are a coiled coil.

The protein belongs to the heat shock protein 90 family. In terms of assembly, homodimer.

It localises to the cytoplasm. Functionally, putative molecular chaperone that may promote the maturation, structural maintenance and proper regulation of specific target proteins. The chain is Putative heat shock protein HSP 90-beta 2 (HSP90AB2P) from Homo sapiens (Human).